A 534-amino-acid chain; its full sequence is Lariat debranching enzyme A (534 aa).

A divalent metal cation contacts are provided by Cys8, His10, Asp39, and Asn84. The interval 124 to 154 is lariat recognition loop; it reads SGIFKSHDYRKGHFERPPYSKDTVRSAYHVR. His174, His226, and His228 together coordinate a divalent metal cation. Disordered regions lie at residues 386–439 and 469–534; these read EEEK…QEDE and SMAV…DEDE. Acidic residues predominate over residues 388-400; that stretch reads EKEDFDMTEDNEA. Positions 413–424 are enriched in polar residues; sequence STDTSILSTSVN. Residues 428–439 show a composition bias toward acidic residues; sequence ITLEDDDEQEDE. A compositionally biased stretch (basic and acidic residues) spans 484 to 499; that stretch reads ELDRSESSQTEGEGKQ.

It belongs to the lariat debranching enzyme family. The cofactor is Fe(2+). It depends on Zn(2+) as a cofactor. Mn(2+) is required as a cofactor.

It localises to the nucleus. With respect to regulation, active in presence of diverse metals including Fe(2+), Zn(2+), Mn(2+). Also activated by Ca(2+). Binds two metal cations in two adjacent alpha and beta metal-binding pockets. Cleaves the 2'-5' phosphodiester linkage at the branch point of excised lariat intron RNA and converts them into linear molecules that can be subsequently degraded, thereby facilitating ribonucleotide turnover. Linked to its role in pre-mRNA processing mechanism, may also participate in retrovirus replication and have an antiviral cell-intrinsic defense function. This chain is Lariat debranching enzyme A (dbr1-a), found in Xenopus laevis (African clawed frog).